The sequence spans 127 residues: Aspartate 1-decarboxylase (127 aa).

Ser-25 (schiff-base intermediate with substrate; via pyruvic acid) is an active-site residue. Position 25 is a pyruvic acid (Ser) (Ser-25). Thr-57 contributes to the substrate binding site. Tyr-58 functions as the Proton donor in the catalytic mechanism. Substrate is bound at residue Gly-73–Ala-75.

Belongs to the PanD family. Heterooctamer of four alpha and four beta subunits. Pyruvate is required as a cofactor. In terms of processing, is synthesized initially as an inactive proenzyme, which is activated by self-cleavage at a specific serine bond to produce a beta-subunit with a hydroxyl group at its C-terminus and an alpha-subunit with a pyruvoyl group at its N-terminus.

Its subcellular location is the cytoplasm. The enzyme catalyses L-aspartate + H(+) = beta-alanine + CO2. It functions in the pathway cofactor biosynthesis; (R)-pantothenate biosynthesis; beta-alanine from L-aspartate: step 1/1. Catalyzes the pyruvoyl-dependent decarboxylation of aspartate to produce beta-alanine. This chain is Aspartate 1-decarboxylase, found in Shouchella clausii (strain KSM-K16) (Alkalihalobacillus clausii).